Reading from the N-terminus, the 149-residue chain is Calmodulin-like protein 3 (149 aa).

EF-hand domains lie at 8–43 (EQIA…LGQN), 44–79 (PTEA…KMKD), 81–116 (DSEE…LGEK), and 117–149 (LSDE…LVSK). The Ca(2+) site is built by Asp-21, Asp-23, Asp-25, Ser-27, Glu-32, Asp-57, Asp-59, Asn-61, Thr-63, Glu-68, Asp-94, Asp-96, Asn-98, Glu-105, Asp-130, Asp-132, Asp-134, Gln-136, and Glu-141.

Belongs to the calmodulin family. As to quaternary structure, interacts with MYO10, the interaction is calcium-dependent and essential for MYO10 function in filopodial extension.

Functionally, may function as a specific light chain of unconventional myosin-10 (MYO10), also enhances MYO10 translation, possibly by acting as a chaperone for the emerging MYO10 heavy chain protein. May compete with calmodulin by binding, with different affinities, to cellular substrates. This chain is Calmodulin-like protein 3 (Calml3), found in Mus musculus (Mouse).